Here is a 259-residue protein sequence, read N- to C-terminus: MQNLSAKDFYKPCRYNCETKNQMWMSGIADSHDSWCDCDTPFAHLLASIFPPGHTDRTRTIQEILTRDFRKTCLSGGADATNSGMAETIEEKREDFQKEEKEDFTEEQNIEDLLAAVADAEGRYQTNQLKTQETKTNMMCPIQSKKHYKLLTQQKTLLPRCSMTGTTDGVALHQQLLKECNKTSQLIHLSNLIQTQNQHPRKKDYYQSSTTHKRKRKRSTNVSSLSAKKVHARSRKRRKTSSSSSSSSSSSSRNSSTTS.

Residues 82–128 (NSGMAETIEEKREDFQKEEKEDFTEEQNIEDLLAAVADAEGRYQTNQ) are a coiled coil. The interval 192-259 (LIQTQNQHPR…SSSRNSSTTS (68 aa)) is disordered. The segment covering 228–240 (KKVHARSRKRRKT) has biased composition (basic residues). Over residues 241–259 (SSSSSSSSSSSSRNSSTTS) the composition is skewed to low complexity.

This is an uncharacterized protein from Homo sapiens (Human).